The chain runs to 325 residues: MSRVVKPKVASMEEMAAFHTDAYLQHLHKVSEEGDNDDPETLEYGLGYDCPITEGIYDYAAAVGGATLTAAEQLIEGKTRIAVNWPGGWHHAKKDEASGFCYLNDAVLGILKLREKFDRVLYVDMDLHHGDGVEDAFSFTSKVMTVSLHKFSPGFFPGTGDVSDIGLGKGRYYSINVPLQDGIQDDKYYQICEGVLKEVFTTFNPEAVVLQLGADTIAGDPMCSFNMTPEGIGKCLKYVLQWQLPTLILGGGGYHLPNTARCWTYLTALIVGRTLSSEIPDHEFFTEYGPDYVLEITPSCRPDRNDTQKVQEILQSIKGNLKRVV.

Residues 1 to 272 form a histone deacetylase region; that stretch reads MSRVVKPKVA…WTYLTALIVG (272 aa). Asp49 lines the substrate pocket. Catalysis depends on His91, which acts as the Proton acceptor. Position 99 (Gly99) interacts with substrate. Positions 126, 128, and 215 each coordinate a divalent metal cation. Tyr254 is a substrate binding site.

The protein belongs to the histone deacetylase family. HD type 1 subfamily. It depends on a divalent metal cation as a cofactor.

Its subcellular location is the nucleus. It localises to the chromosome. It is found in the cytoplasm. It catalyses the reaction N(6)-acetyl-L-lysyl-[histone] + H2O = L-lysyl-[histone] + acetate. The catalysed reaction is N(6)-acetyl-L-lysyl-[protein] + H2O = L-lysyl-[protein] + acetate. The enzyme catalyses N(6)-(2E)-butenoyl-L-lysyl-[protein] + H2O = (2E)-2-butenoate + L-lysyl-[protein]. With respect to regulation, its activity is inhibited by trichostatin A (TSA) and butyrate, 2 well known histone deacetylase inhibitors. Functionally, histone deacetylase that catalyzes the deacetylation of lysine residues on the N-terminal part of the core histones (H2A, H2B, H3 and H4). Histone deacetylation gives a tag for epigenetic repression and plays an important role in transcriptional regulation, cell cycle progression and developmental events. Histone deacetylases act via the formation of large multiprotein complexes. Also involved in the deacetylation of non-histone proteins. In addition to protein deacetylase activity, also has protein-lysine deacylase activity: acts as a protein decrotonylase by mediating decrotonylation ((2E)-butenoyl) of histones. This chain is Histone deacetylase 8 (hdac8), found in Xenopus laevis (African clawed frog).